The sequence spans 344 residues: Krueppel-like factor 3 (344 aa).

The segment at 1-74 (MLMFDPVPVK…TVNKRGSPPA (74 aa)) is repressor domain. Residue Lys10 forms a Glycyl lysine isopeptide (Lys-Gly) (interchain with G-Cter in SUMO) linkage. The short motif at 60 to 68 (EPVDLTVNK) is the 9aaTAD; inactive element. The CTBP-binding motif signature appears at 61–65 (PVDLT). Residues 66–111 (VNKRGSPPAAGGSPSSLKFPSHRRASPGLSMPSSSPPIKKYSPPSP) are disordered. Lys68 participates in a covalent cross-link: Glycyl lysine isopeptide (Lys-Gly) (interchain with G-Cter in SUMO2). 2 stretches are compositionally biased toward low complexity: residues 70 to 81 (GSPPAAGGSPSS) and 91 to 107 (SPGLSMPSSSPPIKKYS). Residues Ser71, Ser91, Ser100, Ser107, and Ser110 each carry the phosphoserine modification. Residue Lys195 forms a Glycyl lysine isopeptide (Lys-Gly) (interchain with G-Cter in SUMO2) linkage. Lys197 participates in a covalent cross-link: Glycyl lysine isopeptide (Lys-Gly) (interchain with G-Cter in SUMO); alternate. A Glycyl lysine isopeptide (Lys-Gly) (interchain with G-Cter in SUMO2); alternate cross-link involves residue Lys197. Phosphoserine is present on residues Ser215, Ser223, and Ser249. The disordered stretch occupies residues 235–254 (SVIVQPGKRPLPVESPDTQR). 3 C2H2-type zinc fingers span residues 259 to 283 (HRCDYDGCNKVYTKSSHLKAHRRTH), 289 to 313 (YKCTWEGCTWKFARSDELTRHFRKH), and 319 to 341 (FQCPDCDRSFSRSDHLALHRKRH).

This sequence belongs to the krueppel C2H2-type zinc-finger protein family. As to quaternary structure, monomer. In terms of processing, sumoylated with SUMO1. Sumoylation is enhanced by PIAS1, PIAS2alpha and PIAS2beta, and PIAS4, but not by Pc2. Enhances transcriptional repression, but has no effect on DNA binding. Sumoylation on Lys-197 is the major site. In terms of tissue distribution, in 8.5 day embryos, expressed in midbrain, anterior hindbrain and ventral forebrain. In 9 day embryos, expressed throughout ventral anterior half of embryo including midbrain-hindbrain junction, ventral midbrain, diencephalon and forebrain. At 10.5 days, distribution is more widespread with expression also found in developing limb buds. Widely expressed in the adult.

Its subcellular location is the nucleus. Binds to the CACCC box of erythroid cell-expressed genes. May play a role in hematopoiesis. In Mus musculus (Mouse), this protein is Krueppel-like factor 3 (Klf3).